The primary structure comprises 313 residues: Ribosomal protein L11 methyltransferase (313 aa).

S-adenosyl-L-methionine is bound by residues Thr151, Gly172, Asp194, and Asn245.

The protein belongs to the methyltransferase superfamily. PrmA family.

The protein localises to the cytoplasm. The enzyme catalyses L-lysyl-[protein] + 3 S-adenosyl-L-methionine = N(6),N(6),N(6)-trimethyl-L-lysyl-[protein] + 3 S-adenosyl-L-homocysteine + 3 H(+). Functionally, methylates ribosomal protein L11. This chain is Ribosomal protein L11 methyltransferase, found in Nitrosomonas europaea (strain ATCC 19718 / CIP 103999 / KCTC 2705 / NBRC 14298).